Consider the following 65-residue polypeptide: Large ribosomal subunit protein uL29 (65 aa).

This sequence belongs to the universal ribosomal protein uL29 family.

The polypeptide is Large ribosomal subunit protein uL29 (Dehalococcoides mccartyi (strain ATCC BAA-2266 / KCTC 15142 / 195) (Dehalococcoides ethenogenes (strain 195))).